The sequence spans 398 residues: Aurofusarin biosynthesis regulatory protein aurR1 (398 aa).

Positions 18–45 (CDNCAKSKVRCGKEQPWCQRCERRGQVC) form a DNA-binding region, zn(2)-C6 fungal-type. Disordered stretches follow at residues 52 to 73 (RSRK…GTPP) and 275 to 314 (AATI…SSLI). 2 stretches are compositionally biased toward basic and acidic residues: residues 56–67 (RTLDAAHPESDQ) and 289–298 (DGKDTERSVS). Positions 299–311 (RDTNVSQDGSEPS) are enriched in polar residues.

It is found in the nucleus. Its function is as follows. Transcription factor that specifically regulates the expression of the gene cluster that mediates the biosynthesis of aurofusarin, a red mycelium pigment which is acting as a mycotoxin. This Gibberella zeae (strain ATCC MYA-4620 / CBS 123657 / FGSC 9075 / NRRL 31084 / PH-1) (Wheat head blight fungus) protein is Aurofusarin biosynthesis regulatory protein aurR1.